Reading from the N-terminus, the 398-residue chain is Phosphoglycerate kinase (398 aa).

Residues 23–25 (DLN), Arg38, 61–64 (HFGR), Arg120, and Arg153 each bind substrate. ATP-binding positions include Lys203, Glu325, and 355–358 (GGDT).

Belongs to the phosphoglycerate kinase family. Monomer.

It localises to the cytoplasm. It catalyses the reaction (2R)-3-phosphoglycerate + ATP = (2R)-3-phospho-glyceroyl phosphate + ADP. It functions in the pathway carbohydrate degradation; glycolysis; pyruvate from D-glyceraldehyde 3-phosphate: step 2/5. This is Phosphoglycerate kinase from Mesorhizobium japonicum (strain LMG 29417 / CECT 9101 / MAFF 303099) (Mesorhizobium loti (strain MAFF 303099)).